The sequence spans 162 residues: Scytalone dehydratase-like protein claB (162 aa).

Y48 serves as a coordination point for substrate. Active-site residues include H83 and H108.

Belongs to the scytalone dehydratase family.

It functions in the pathway pigment biosynthesis. Functionally, scytalone dehydratase-like protein; part of the gene cluster that mediates the biosynthesis of the bianthraquinone cladofulvin, a conidial pigment not required for virulence but that plays a role in fitness and resistance to environmental stresses including UV light and low-temperature stress. The pathway begins with the synthesis of atrochrysone thioester by the polyketide synthase (PKS) claG. The atrochrysone carboxyl ACP thioesterase claF then breaks the thioester bond and releases the atrochrysone carboxylic acid from claG. This compound is decarboxylated by claH to yield emodin, which is further converted to chrysophanol hydroquinone by the reductase claC and the dehydratase claB. The cytochrome P450 monooxygenase claM then catalyzes the dimerization of nataloe-emodin to cladofulvin. This Passalora fulva (Tomato leaf mold) protein is Scytalone dehydratase-like protein claB.